The primary structure comprises 213 residues: Uracil phosphoribosyltransferase (213 aa).

5-phospho-alpha-D-ribose 1-diphosphate contacts are provided by residues Arg-78, Arg-103, and 130 to 138 (DPMLATGGS). Residues Ile-197 and 202-204 (GDA) contribute to the uracil site. Asp-203 lines the 5-phospho-alpha-D-ribose 1-diphosphate pocket.

It belongs to the UPRTase family. Requires Mg(2+) as cofactor.

It catalyses the reaction UMP + diphosphate = 5-phospho-alpha-D-ribose 1-diphosphate + uracil. It participates in pyrimidine metabolism; UMP biosynthesis via salvage pathway; UMP from uracil: step 1/1. With respect to regulation, allosterically activated by GTP. Functionally, catalyzes the conversion of uracil and 5-phospho-alpha-D-ribose 1-diphosphate (PRPP) to UMP and diphosphate. The chain is Uracil phosphoribosyltransferase from Cutibacterium acnes (strain DSM 16379 / KPA171202) (Propionibacterium acnes).